We begin with the raw amino-acid sequence, 525 residues long: Putative ribose/galactose/methyl galactoside import ATP-binding protein (525 aa).

Residues 1–20 (MSGSATASPPAKPDLPSSDG) are disordered. ABC transporter domains are found at residues 33 to 269 (LEIS…VGRE) and 279 to 523 (KPAG…SGHR). 65 to 72 (GENGAGKS) serves as a coordination point for ATP.

It belongs to the ABC transporter superfamily. Carbohydrate importer 2 (CUT2) (TC 3.A.1.2) family.

The protein resides in the cell inner membrane. It catalyses the reaction D-ribose(out) + ATP + H2O = D-ribose(in) + ADP + phosphate + H(+). The catalysed reaction is D-galactose(out) + ATP + H2O = D-galactose(in) + ADP + phosphate + H(+). Part of an ABC transporter complex involved in carbohydrate import. Could be involved in ribose, galactose and/or methyl galactoside import. Responsible for energy coupling to the transport system. The protein is Putative ribose/galactose/methyl galactoside import ATP-binding protein of Pseudomonas syringae pv. tomato (strain ATCC BAA-871 / DC3000).